The primary structure comprises 193 residues: Holliday junction branch migration complex subunit RuvA (193 aa).

A domain I region spans residues 1 to 63 (MIHHLKGQLI…EDSHTLYGFA (63 aa)). The segment at 64–142 (EKSEREIFRL…KVLGDDEVFV (79 aa)) is domain II. The tract at residues 143–145 (SQS) is flexible linker. The tract at residues 145-193 (SNTNKEEALSALEILGYNRRQAGKVVEKILKEDPESTVESIIKMALKKL) is domain III.

It belongs to the RuvA family. In terms of assembly, homotetramer. Forms an RuvA(8)-RuvB(12)-Holliday junction (HJ) complex. HJ DNA is sandwiched between 2 RuvA tetramers; dsDNA enters through RuvA and exits via RuvB. An RuvB hexamer assembles on each DNA strand where it exits the tetramer. Each RuvB hexamer is contacted by two RuvA subunits (via domain III) on 2 adjacent RuvB subunits; this complex drives branch migration. In the full resolvosome a probable DNA-RuvA(4)-RuvB(12)-RuvC(2) complex forms which resolves the HJ.

The protein localises to the cytoplasm. In terms of biological role, the RuvA-RuvB-RuvC complex processes Holliday junction (HJ) DNA during genetic recombination and DNA repair, while the RuvA-RuvB complex plays an important role in the rescue of blocked DNA replication forks via replication fork reversal (RFR). RuvA specifically binds to HJ cruciform DNA, conferring on it an open structure. The RuvB hexamer acts as an ATP-dependent pump, pulling dsDNA into and through the RuvAB complex. HJ branch migration allows RuvC to scan DNA until it finds its consensus sequence, where it cleaves and resolves the cruciform DNA. The sequence is that of Holliday junction branch migration complex subunit RuvA from Christiangramia forsetii (strain DSM 17595 / CGMCC 1.15422 / KT0803) (Gramella forsetii).